The sequence spans 321 residues: Cytochrome c biogenesis protein CcsA (321 aa).

8 helical membrane passes run 17–37 (VVSI…FVGL), 48–68 (TFFC…HLPI), 71–91 (LYES…VPYF), 98–118 (LSTI…WGLL), 143–163 (MVSG…LLVI), 225–245 (ILSI…VWAN), 259–273 (TWAF…IYFH), and 286–306 (AIVA…VNLL).

This sequence belongs to the CcmF/CycK/Ccl1/NrfE/CcsA family. In terms of assembly, may interact with Ccs1.

The protein localises to the plastid. It localises to the chloroplast thylakoid membrane. Its function is as follows. Required during biogenesis of c-type cytochromes (cytochrome c6 and cytochrome f) at the step of heme attachment. The polypeptide is Cytochrome c biogenesis protein CcsA (Populus alba (White poplar)).